We begin with the raw amino-acid sequence, 178 residues long: Gamma-crystallin S (178 aa).

The residue at position 2 (Ser-2) is an N-acetylserine. The interval 2–5 (SKTG) is N-terminal arm. Beta/gamma crystallin 'Greek key' domains are found at residues 6 to 44 (TKIT…KVEG) and 45 to 87 (GTWA…RAVH). The tract at residues 88-93 (LPSGGQ) is connecting peptide. Beta/gamma crystallin 'Greek key' domains are found at residues 94–134 (YKIQ…KVLE) and 135–177 (GVWI…RRIV).

This sequence belongs to the beta/gamma-crystallin family. In terms of assembly, monomer.

Its function is as follows. Crystallins are the dominant structural components of the vertebrate eye lens. The protein is Gamma-crystallin S (CRYGS) of Homo sapiens (Human).